A 1117-amino-acid polypeptide reads, in one-letter code: DNA polymerase II large subunit (1117 aa).

A compositionally biased stretch (basic and acidic residues) spans 279–294; it reads STKEEEKKKEESSENK. A disordered region spans residues 279 to 299; the sequence is STKEEEKKKEESSENKPKKKA.

Belongs to the archaeal DNA polymerase II family. In terms of assembly, heterodimer of a large subunit and a small subunit.

It carries out the reaction DNA(n) + a 2'-deoxyribonucleoside 5'-triphosphate = DNA(n+1) + diphosphate. It catalyses the reaction Exonucleolytic cleavage in the 3'- to 5'-direction to yield nucleoside 5'-phosphates.. Its function is as follows. Possesses two activities: a DNA synthesis (polymerase) and an exonucleolytic activity that degrades single-stranded DNA in the 3'- to 5'-direction. Has a template-primer preference which is characteristic of a replicative DNA polymerase. This chain is DNA polymerase II large subunit, found in Methanosphaera stadtmanae (strain ATCC 43021 / DSM 3091 / JCM 11832 / MCB-3).